The following is a 364-amino-acid chain: MHFLQNSLIAAAMGAALVAAAPAADLDARSSCTFTSASAAKSGASKCSTVTLKSIQVPAGETLDLTGLKSGATVIFEGETTFGYKEWKGPLISMSGDKITVKQASGAKINCDGARWWDTKGSNGGKTKPKFFSAHKLNNSKIQGLKIYNTPVQGFSIQSDHLTISDVTIDNSAGTSKGHNTDAFDIGSSTYITIDGATVYNQDDCIAINSGEHITFTNGYCSGGHGLSIGSVGGRSDNTVKSVTISNSKVVDSQNGVRIKTVYKATGSVTDVTFQDIELSGITKYGLIVEQDYENGSPTGTPTNGVEVEDITFKKITGSVDSSATRVNILCGSGSCKDWTWSGVDITGGKKSSKCKNVPSGASC.

The N-terminal stretch at 1–20 (MHFLQNSLIAAAMGAALVAA) is a signal peptide. A propeptide spanning residues 21–29 (APAADLDAR) is cleaved from the precursor. A disulfide bridge links cysteine 32 with cysteine 47. Asparagine 138 is a glycosylation site (N-linked (GlcNAc...) asparagine). PbH1 repeat units follow at residues 159-188 (SDHL…DIGS), 189-210 (STYI…AINS), 211-231 (GEHI…SIGS), 240-261 (VKSV…RIKT), 269-291 (VTDV…IVEQ), and 303-348 (TNGV…DITG). The active-site Proton donor is the aspartate 203. Cysteine 205 and cysteine 221 are oxidised to a cystine. Residue histidine 225 is part of the active site. 2 disulfides stabilise this stretch: cysteine 331–cysteine 336 and cysteine 355–cysteine 364.

It belongs to the glycosyl hydrolase 28 family.

It is found in the secreted. It carries out the reaction (1,4-alpha-D-galacturonosyl)n+m + H2O = (1,4-alpha-D-galacturonosyl)n + (1,4-alpha-D-galacturonosyl)m.. Its function is as follows. Involved in maceration and soft-rotting of plant tissue. Hydrolyzes the 1,4-alpha glycosidic bonds of de-esterified pectate in the smooth region of the plant cell wall. In Emericella nidulans (strain FGSC A4 / ATCC 38163 / CBS 112.46 / NRRL 194 / M139) (Aspergillus nidulans), this protein is Endopolygalacturonase B (pgaB).